The sequence spans 87 residues: Selenoprotein W (87 aa).

The segment at residues 10–13 (CGAU) is a cross-link (cysteinyl-selenocysteine (Cys-Sec); redox-active). A non-standard amino acid (selenocysteine) is located at residue U13. C37 is modified (S-glutathionyl cysteine).

This sequence belongs to the SelWTH family. Selenoprotein W subfamily. As to quaternary structure, interacts with DPYSL2, PRDX1, YWHAB, YWHAG, HSP70 and HSP90.

The protein localises to the cytoplasm. In terms of biological role, plays a role as a glutathione (GSH)-dependent antioxidant. May be involved in a redox-related process. May play a role in the myopathies of selenium deficiency. The polypeptide is Selenoprotein W (Sus scrofa (Pig)).